A 119-amino-acid chain; its full sequence is Large ribosomal subunit protein uL18 (119 aa).

Belongs to the universal ribosomal protein uL18 family. As to quaternary structure, part of the 50S ribosomal subunit; part of the 5S rRNA/L5/L18/L25 subcomplex. Contacts the 5S and 23S rRNAs.

In terms of biological role, this is one of the proteins that bind and probably mediate the attachment of the 5S RNA into the large ribosomal subunit, where it forms part of the central protuberance. This is Large ribosomal subunit protein uL18 from Cupriavidus taiwanensis (strain DSM 17343 / BCRC 17206 / CCUG 44338 / CIP 107171 / LMG 19424 / R1) (Ralstonia taiwanensis (strain LMG 19424)).